The following is a 395-amino-acid chain: Guanine nucleotide-binding protein subunit beta-5b (395 aa).

WD repeat units lie at residues 103–142, 145–184, 193–234, 235–276, 279–318, 320–362, and 365–395; these read GHGNKVLCMDWCRDKRRIVSSSQDGKVIVWDAYTTNKEHA, MPCTWVMACAYAPSGCAVACGGLDNKCSVYPLSLDKNENL, MHTN…QSFH, GHSA…NVQS, THDSDINSVKYYPSGDAFASGSDDATCRLYDLRADREVAI, SKDS…RVAI, and GHENRVSTVRVSPDGTAFCSGSWDNTLRIWA.

This sequence belongs to the WD repeat G protein beta family. May interact with RGS9; this interaction stabilizes both proteins and increases RGS9 GTPase-activating protein (GAP) activity, hence accelerating the deactivation of D(2) dopamine receptor-mediated signaling.

It is found in the membrane. Its function is as follows. Enhances GTPase-activating protein (GAP) activity of regulator of G protein signaling (RGS) proteins, such as RGS7 and RGS9, hence involved in the termination of the signaling initiated by the G protein coupled receptors (GPCRs) by accelerating the GTP hydrolysis on the G-alpha subunits, thereby promoting their inactivation. Increases RGS7 GTPase-activating protein (GAP) activity, thereby regulating mood and cognition. Increases RGS9 GTPase-activating protein (GAP) activity, hence contributes to the deactivation of G protein signaling initiated by D(2) dopamine receptors. Along with gnb5a, plays an important role in neuronal signaling, including in the parasympathetic, but not sympathetic, control of heart rate. This chain is Guanine nucleotide-binding protein subunit beta-5b, found in Danio rerio (Zebrafish).